A 174-amino-acid chain; its full sequence is RNA pyrophosphohydrolase (174 aa).

The 144-residue stretch at Gly-6–Lys-149 folds into the Nudix hydrolase domain. The short motif at Gly-38 to Gly-59 is the Nudix box element.

Belongs to the Nudix hydrolase family. RppH subfamily. The cofactor is a divalent metal cation.

Functionally, accelerates the degradation of transcripts by removing pyrophosphate from the 5'-end of triphosphorylated RNA, leading to a more labile monophosphorylated state that can stimulate subsequent ribonuclease cleavage. This is RNA pyrophosphohydrolase from Neisseria meningitidis serogroup B (strain ATCC BAA-335 / MC58).